We begin with the raw amino-acid sequence, 407 residues long: Argininosuccinate synthase (407 aa).

ATP-binding positions include 16-24 and Ala-44; that span reads AYSGGLDTS. 2 residues coordinate L-citrulline: Tyr-96 and Ser-101. Residue Gly-126 participates in ATP binding. The L-aspartate site is built by Thr-128, Asn-132, and Asp-133. Asn-132 contacts L-citrulline. Arg-136, Ser-185, Ser-194, Glu-270, and Tyr-282 together coordinate L-citrulline.

This sequence belongs to the argininosuccinate synthase family. Type 1 subfamily. As to quaternary structure, homotetramer.

The protein localises to the cytoplasm. The catalysed reaction is L-citrulline + L-aspartate + ATP = 2-(N(omega)-L-arginino)succinate + AMP + diphosphate + H(+). It functions in the pathway amino-acid biosynthesis; L-arginine biosynthesis; L-arginine from L-ornithine and carbamoyl phosphate: step 2/3. The sequence is that of Argininosuccinate synthase from Shewanella frigidimarina (strain NCIMB 400).